A 454-amino-acid chain; its full sequence is MAQLLTSRQAEELHRALIAYLSSNNLTSTAAALRAEIGLGEDVFDATTAKKYEGLLEKKWTSVVRLQKKVRHTSQLSNATPTSRQNKDPVNWLPKSPARHTLQSHRQPITCVAFHPVFSSLASGSEDQTIKIWDWELGELERTIKGHTKTVLDVDFGGPRGNTLLASCSSDLTIKLWDPSDDYKNIRTLPGHDHSVSAVRFIPSGVAGGAGNLLVSASRDKTLRIWDVSTGYCVKTLRGHAEWVRDVCPSVDGRFILSTSDDYTSRLWDVSIANPEPKTTLIGHEHVVLCCAIAPSASYPHLAAIAGVKKPPTTSAVEFMATGSRDKTIRLWDARGTCIKILVGHDNWVRGLVFHPGGKYLLSASDDYTLRCWDLTQEGRCVKTISDAHAHFVQCIRWAPSVVKDVSVANGGDGQGGEANGTPRQAAGAGAAEAQIRCVLATGSVDLNVRIFAN.

In terms of domain architecture, LisH spans Gln-9–Glu-41. The segment at Arg-71 to Leu-93 is disordered. Residues Thr-73 to Arg-84 are compositionally biased toward polar residues. 7 WD repeats span residues Ser-104–Lys-145, His-147–Arg-187, Gly-191–Thr-236, Gly-239–Lys-278, Gly-283–Leu-342, Gly-344–Lys-383, and Ala-388–Arg-450.

The protein belongs to the WD repeat LIS1/nudF family. As to quaternary structure, self-associates. Interacts with NDL1 and dynein.

The protein resides in the cytoplasm. It is found in the cytoskeleton. Its subcellular location is the spindle pole. In terms of biological role, positively regulates the activity of the minus-end directed microtubule motor protein dynein. May enhance dynein-mediated microtubule sliding by targeting dynein to the microtubule plus end. Required for nuclear migration during vegetative growth as well as development. Required for retrograde early endosome (EE) transport from the hyphal tip. Required for localization of dynein to the mitotic spindle poles. Recruits additional proteins to the dynein complex at SPBs. The sequence is that of Nuclear distribution protein PAC1-1 from Chaetomium globosum (strain ATCC 6205 / CBS 148.51 / DSM 1962 / NBRC 6347 / NRRL 1970) (Soil fungus).